The sequence spans 740 residues: Putative Pol polyprotein from transposon element Bs1 (740 aa).

One copy of the PPR repeat lies at 469 to 503; the sequence is TAVAHNLLVQALFMDGRASDAYVVLEEMQNNGPFP.

Bs1 is probably an active plant retrotransposon. This Zea mays (Maize) protein is Putative Pol polyprotein from transposon element Bs1.